Reading from the N-terminus, the 123-residue chain is MPTINQLIRIGRESKKDKSTAPALKCCPQKRGVCTRVYTTTPKKPNSALRKVARVRLTNGVEVTSYIPGVGHNLQEHSVVLIRGGRVKDLPGVRYHIVRGTLDSVGVKDRKKSRSKYGAKRPK.

The residue at position 89 (Asp-89) is a 3-methylthioaspartic acid.

It belongs to the universal ribosomal protein uS12 family. Part of the 30S ribosomal subunit. Contacts proteins S8 and S17. May interact with IF1 in the 30S initiation complex.

In terms of biological role, with S4 and S5 plays an important role in translational accuracy. Interacts with and stabilizes bases of the 16S rRNA that are involved in tRNA selection in the A site and with the mRNA backbone. Located at the interface of the 30S and 50S subunits, it traverses the body of the 30S subunit contacting proteins on the other side and probably holding the rRNA structure together. The combined cluster of proteins S8, S12 and S17 appears to hold together the shoulder and platform of the 30S subunit. The sequence is that of Small ribosomal subunit protein uS12 from Geotalea uraniireducens (strain Rf4) (Geobacter uraniireducens).